The sequence spans 491 residues: Acetyl-coenzyme A carboxylase carboxyl transferase subunit beta, chloroplastic (491 aa).

The interval 26-49 is disordered; it reads ARPRPIGNTNGSQDPSINDRDKNG. Positions 32–41 are enriched in polar residues; the sequence is GNTNGSQDPS. In terms of domain architecture, CoA carboxyltransferase N-terminal spans 222–491; sequence LWVQCDNCYG…PLNHNSQVKR (270 aa). 4 residues coordinate Zn(2+): cysteine 226, cysteine 229, cysteine 245, and cysteine 248. The segment at 226–248 adopts a C4-type zinc-finger fold; that stretch reads CDNCYGLNYKKIFSSKMNICEQC.

Belongs to the AccD/PCCB family. Acetyl-CoA carboxylase is a heterohexamer composed of biotin carboxyl carrier protein, biotin carboxylase and 2 subunits each of ACCase subunit alpha and ACCase plastid-coded subunit beta (accD). Zn(2+) serves as cofactor.

It is found in the plastid. The protein resides in the chloroplast stroma. It carries out the reaction N(6)-carboxybiotinyl-L-lysyl-[protein] + acetyl-CoA = N(6)-biotinyl-L-lysyl-[protein] + malonyl-CoA. It functions in the pathway lipid metabolism; malonyl-CoA biosynthesis; malonyl-CoA from acetyl-CoA: step 1/1. Component of the acetyl coenzyme A carboxylase (ACC) complex. Biotin carboxylase (BC) catalyzes the carboxylation of biotin on its carrier protein (BCCP) and then the CO(2) group is transferred by the transcarboxylase to acetyl-CoA to form malonyl-CoA. The chain is Acetyl-coenzyme A carboxylase carboxyl transferase subunit beta, chloroplastic from Ceratophyllum demersum (Rigid hornwort).